A 155-amino-acid chain; its full sequence is Endoribonuclease YbeY (155 aa).

Histidine 114, histidine 118, and histidine 124 together coordinate Zn(2+).

Belongs to the endoribonuclease YbeY family. It depends on Zn(2+) as a cofactor.

Its subcellular location is the cytoplasm. Functionally, single strand-specific metallo-endoribonuclease involved in late-stage 70S ribosome quality control and in maturation of the 3' terminus of the 16S rRNA. In Erwinia tasmaniensis (strain DSM 17950 / CFBP 7177 / CIP 109463 / NCPPB 4357 / Et1/99), this protein is Endoribonuclease YbeY.